A 98-amino-acid chain; its full sequence is uncharacterized protein (98 aa).

A compositionally biased stretch (basic residues) spans 19 to 31; sequence RRMSKRSKNKAKK. Positions 19-47 are disordered; it reads RRMSKRSKNKAKKERVPVEDRPPTPMPTS.

Belongs to the lymphocryptovirus BNLF2b family.

This is an uncharacterized protein from Homo sapiens (Human).